Here is a 405-residue protein sequence, read N- to C-terminus: MKYTEIMVRYGELSTKGKNRKDFIARLGGNIRKSLKDFEDVEIHPNRDRTHVTLNGTDSDAVINRLKKVFGIQNFSPMLKVEKTMEAVQAGALEMMKEQLKPGMTFKINTRRSDKEFAINTDTMNRELGGFILDNFPDNDVKMKNPDITLRVEIRSNGIFLTSEVINGAGGLPVGTAGKGMMMLSGGIDSPVAGYLGMKRGVEMEMVHFFSPPYTSEQALAKAKELSGKLAAYSGSVQFIQVPFTEIQETIKEKCPEGYLMTIQRRMMLRLVVALAKQRGGLAIFNGESLGQVASQTMESMLAINDVTTMPIIRPVVSMDKNEIIDIAKDIDTYDLSIMPFEDCCTIFAPPSPKTHPDLEKTRYFEKRIDVEGLLERSLAGVKITNIRAEENFMNQNEEVFAELL.

One can recognise a THUMP domain in the interval 60-165 (DAVINRLKKV…SNGIFLTSEV (106 aa)). Residues 183–184 (ML), 208–209 (HF), Arg265, Gly287, and Gln296 each bind ATP.

The protein belongs to the ThiI family.

It localises to the cytoplasm. The catalysed reaction is [ThiI sulfur-carrier protein]-S-sulfanyl-L-cysteine + a uridine in tRNA + 2 reduced [2Fe-2S]-[ferredoxin] + ATP + H(+) = [ThiI sulfur-carrier protein]-L-cysteine + a 4-thiouridine in tRNA + 2 oxidized [2Fe-2S]-[ferredoxin] + AMP + diphosphate. It catalyses the reaction [ThiS sulfur-carrier protein]-C-terminal Gly-Gly-AMP + S-sulfanyl-L-cysteinyl-[cysteine desulfurase] + AH2 = [ThiS sulfur-carrier protein]-C-terminal-Gly-aminoethanethioate + L-cysteinyl-[cysteine desulfurase] + A + AMP + 2 H(+). The protein operates within cofactor biosynthesis; thiamine diphosphate biosynthesis. Functionally, catalyzes the ATP-dependent transfer of a sulfur to tRNA to produce 4-thiouridine in position 8 of tRNAs, which functions as a near-UV photosensor. Also catalyzes the transfer of sulfur to the sulfur carrier protein ThiS, forming ThiS-thiocarboxylate. This is a step in the synthesis of thiazole, in the thiamine biosynthesis pathway. The sulfur is donated as persulfide by IscS. The sequence is that of Probable tRNA sulfurtransferase from Pediococcus pentosaceus (strain ATCC 25745 / CCUG 21536 / LMG 10740 / 183-1w).